A 634-amino-acid chain; its full sequence is Formate--tetrahydrofolate ligase (634 aa).

78–85 (TPLGEGKS) serves as a coordination point for ATP.

This sequence belongs to the formate--tetrahydrofolate ligase family. Homodimer.

The catalysed reaction is (6S)-5,6,7,8-tetrahydrofolate + formate + ATP = (6R)-10-formyltetrahydrofolate + ADP + phosphate. It functions in the pathway one-carbon metabolism; tetrahydrofolate interconversion. This Arabidopsis thaliana (Mouse-ear cress) protein is Formate--tetrahydrofolate ligase (THFS).